The chain runs to 208 residues: Uracil phosphoribosyltransferase (208 aa).

Residues Arg-78, Arg-103, and 130–138 contribute to the 5-phospho-alpha-D-ribose 1-diphosphate site; that span reads DPMLATGGS. Residues Ile-193 and 198-200 contribute to the uracil site; that span reads GDA. A 5-phospho-alpha-D-ribose 1-diphosphate-binding site is contributed by Asp-199.

It belongs to the UPRTase family. Requires Mg(2+) as cofactor.

The enzyme catalyses UMP + diphosphate = 5-phospho-alpha-D-ribose 1-diphosphate + uracil. It participates in pyrimidine metabolism; UMP biosynthesis via salvage pathway; UMP from uracil: step 1/1. Allosterically activated by GTP. Its function is as follows. Catalyzes the conversion of uracil and 5-phospho-alpha-D-ribose 1-diphosphate (PRPP) to UMP and diphosphate. This Aeromonas salmonicida (strain A449) protein is Uracil phosphoribosyltransferase.